The chain runs to 82 residues: MATKKEFDIFAHELVPEHRILSEEETKELLRRYRIQISQLPQIKASDPAVVALGAKPGDVLEIKRKSRTAGYYYYYRLVVED.

It belongs to the archaeal Rpo5/eukaryotic RPB5 RNA polymerase subunit family. In terms of assembly, part of the RNA polymerase complex.

The protein resides in the cytoplasm. The enzyme catalyses RNA(n) + a ribonucleoside 5'-triphosphate = RNA(n+1) + diphosphate. DNA-dependent RNA polymerase (RNAP) catalyzes the transcription of DNA into RNA using the four ribonucleoside triphosphates as substrates. The chain is DNA-directed RNA polymerase subunit Rpo5 from Thermococcus celer.